The chain runs to 256 residues: Fibroblast growth factor 3 (256 aa).

The N-terminal stretch at 1–18 (MVIILLLLLLSFLDPSLE) is a signal peptide. 3 disordered regions span residues 31–54 (APCA…GGVY), 151–176 (RHHA…SSKR), and 219–256 (LRES…RADI). A compositionally biased stretch (basic residues) spans 238–256 (ERRRRRHRGSKGHNRRADI).

The protein belongs to the heparin-binding growth factors family.

It localises to the secreted. Functionally, plays an important role in the regulation of embryonic development, cell proliferation, and cell differentiation. This chain is Fibroblast growth factor 3 (fgf3), found in Danio rerio (Zebrafish).